The sequence spans 609 residues: Dihydroxy-acid dehydratase (609 aa).

Position 81 (aspartate 81) interacts with Mg(2+). Residue cysteine 122 participates in [2Fe-2S] cluster binding. Residues aspartate 123 and lysine 124 each coordinate Mg(2+). Lysine 124 is modified (N6-carboxylysine). Residue cysteine 195 coordinates [2Fe-2S] cluster. Glutamate 491 provides a ligand contact to Mg(2+). The Proton acceptor role is filled by serine 517.

This sequence belongs to the IlvD/Edd family. In terms of assembly, homodimer. [2Fe-2S] cluster serves as cofactor. The cofactor is Mg(2+).

The enzyme catalyses (2R)-2,3-dihydroxy-3-methylbutanoate = 3-methyl-2-oxobutanoate + H2O. The catalysed reaction is (2R,3R)-2,3-dihydroxy-3-methylpentanoate = (S)-3-methyl-2-oxopentanoate + H2O. It functions in the pathway amino-acid biosynthesis; L-isoleucine biosynthesis; L-isoleucine from 2-oxobutanoate: step 3/4. Its pathway is amino-acid biosynthesis; L-valine biosynthesis; L-valine from pyruvate: step 3/4. Its function is as follows. Functions in the biosynthesis of branched-chain amino acids. Catalyzes the dehydration of (2R,3R)-2,3-dihydroxy-3-methylpentanoate (2,3-dihydroxy-3-methylvalerate) into 2-oxo-3-methylpentanoate (2-oxo-3-methylvalerate) and of (2R)-2,3-dihydroxy-3-methylbutanoate (2,3-dihydroxyisovalerate) into 2-oxo-3-methylbutanoate (2-oxoisovalerate), the penultimate precursor to L-isoleucine and L-valine, respectively. In Acinetobacter baumannii (strain ACICU), this protein is Dihydroxy-acid dehydratase.